The chain runs to 488 residues: Dipeptidase 3 (488 aa).

An N-terminal signal peptide occupies residues 1–35; that stretch reads MQPTGPEGPRALSLRPLGHRLSLLGVLLIIPSLWV. Residues 41–60 are compositionally biased toward low complexity; sequence TPSLSSAPTSPGASSAMTTP. The segment at 41–74 is disordered; the sequence is TPSLSSAPTSPGASSAMTTPGIPNDTTTSGVTSD. Cystine bridges form between cysteine 143-cysteine 222 and cysteine 294-cysteine 326. Asparagine 331 carries N-linked (GlcNAc...) asparagine glycosylation. The GPI-anchor amidated serine moiety is linked to residue serine 459. A propeptide spans 460–487 (removed in mature form); it reads KAPPCPLLGLVAAVTSPAFTLWLCCSGH.

This sequence belongs to the metallo-dependent hydrolases superfamily. Peptidase M19 family. Homodimer; disulfide-linked. Interacts with TEX101; co-localized on the cell surface of spermatocytes, spermatids, and testicular spermatozoa, co-localized only in cytoplasmic droplets of caput and corpus epididymal sperm.

Its subcellular location is the membrane. Functionally, lacks dipeptidase activity and is unable to hydrolyze cystinyl-bis-glycine, leukotriene D4 and the beta-lactam antibiotic imipenem. The absence of activity may be due to the inability of serine (instead of aspartate found in DPEP1/2) at position 356 to function as the acid/base catalyst and activate the nucleophilic water/hydroxide. The polypeptide is Dipeptidase 3 (Dpep3) (Rattus norvegicus (Rat)).